The chain runs to 205 residues: UPF0688 protein C1orf174 homolog (205 aa).

Positions 1 to 18 are enriched in basic residues; it reads MRKRKLSDRVRCSARLKN. Disordered regions lie at residues 1–128 and 184–205; these read MRKR…PSKV and AKEE…EGNI. Basic and acidic residues predominate over residues 46–63; that stretch reads NTDKKSPKKLENDEKGLM. A compositionally biased stretch (polar residues) spans 71–108; sequence INKTDNTASNESNAGNVNTCPSASPFSDLNEVSRNGLT. The segment covering 187–196 has biased composition (acidic residues); that stretch reads EEEDDDDDYA.

Belongs to the UPF0688 family.

Its subcellular location is the nucleus. This is UPF0688 protein C1orf174 homolog from Xenopus laevis (African clawed frog).